The chain runs to 619 residues: Chaperone protein HscA homolog (619 aa).

This sequence belongs to the heat shock protein 70 family.

Its function is as follows. Chaperone involved in the maturation of iron-sulfur cluster-containing proteins. Has a low intrinsic ATPase activity which is markedly stimulated by HscB. The chain is Chaperone protein HscA homolog from Pseudomonas aeruginosa (strain LESB58).